Here is a 402-residue protein sequence, read N- to C-terminus: Argininosuccinate synthase (402 aa).

Residues alanine 9–serine 17 and alanine 36 each bind ATP. Tyrosine 87 and serine 92 together coordinate L-citrulline. Glycine 117 is a binding site for ATP. Threonine 119, asparagine 123, and aspartate 124 together coordinate L-aspartate. Asparagine 123 serves as a coordination point for L-citrulline. Arginine 127, serine 176, serine 185, glutamate 261, and tyrosine 273 together coordinate L-citrulline.

Belongs to the argininosuccinate synthase family. Type 1 subfamily. Homotetramer.

The protein resides in the cytoplasm. The enzyme catalyses L-citrulline + L-aspartate + ATP = 2-(N(omega)-L-arginino)succinate + AMP + diphosphate + H(+). It participates in amino-acid biosynthesis; L-arginine biosynthesis; L-arginine from L-ornithine and carbamoyl phosphate: step 2/3. The chain is Argininosuccinate synthase from Deinococcus radiodurans (strain ATCC 13939 / DSM 20539 / JCM 16871 / CCUG 27074 / LMG 4051 / NBRC 15346 / NCIMB 9279 / VKM B-1422 / R1).